Here is a 498-residue protein sequence, read N- to C-terminus: Ulvan-active sulfatase (498 aa).

An N-terminal signal peptide occupies residues 1–22 (MNSKKTGVIILGCIAFLHIACS). The Ca(2+) site is built by D55, D56, C95, D266, and H267. C95 functions as the Nucleophile in the catalytic mechanism. C95 is subject to 3-oxoalanine (Cys).

This sequence belongs to the sulfatase family. Ca(2+) serves as cofactor. Post-translationally, the conversion to 3-oxoalanine (also known as C-formylglycine, FGly), of a serine or cysteine residue in prokaryotes and of a cysteine residue in eukaryotes, is critical for catalytic activity. This post-translational modification is severely defective in multiple sulfatase deficiency (MSD).

The protein localises to the periplasm. Functionally, sulfatase involved in ulvan degradation. Ulvan is the main polysaccharide component of the Ulvales (green seaweed) cell wall. It is composed of disaccharide building blocks comprising 3-sulfated rhamnose (Rha3S) linked to D-glucuronic acid (GlcA), L-iduronic acid (IduA), or D-xylose (Xyl). This Formosa agariphila (strain DSM 15362 / KCTC 12365 / LMG 23005 / KMM 3901 / M-2Alg 35-1) protein is Ulvan-active sulfatase.